Consider the following 251-residue polypeptide: Imidazole glycerol phosphate synthase subunit HisF (251 aa).

Residues Asp-11 and Asp-130 contribute to the active site.

Belongs to the HisA/HisF family. In terms of assembly, heterodimer of HisH and HisF.

The protein resides in the cytoplasm. It carries out the reaction 5-[(5-phospho-1-deoxy-D-ribulos-1-ylimino)methylamino]-1-(5-phospho-beta-D-ribosyl)imidazole-4-carboxamide + L-glutamine = D-erythro-1-(imidazol-4-yl)glycerol 3-phosphate + 5-amino-1-(5-phospho-beta-D-ribosyl)imidazole-4-carboxamide + L-glutamate + H(+). It functions in the pathway amino-acid biosynthesis; L-histidine biosynthesis; L-histidine from 5-phospho-alpha-D-ribose 1-diphosphate: step 5/9. Its function is as follows. IGPS catalyzes the conversion of PRFAR and glutamine to IGP, AICAR and glutamate. The HisF subunit catalyzes the cyclization activity that produces IGP and AICAR from PRFAR using the ammonia provided by the HisH subunit. This chain is Imidazole glycerol phosphate synthase subunit HisF, found in Flavobacterium psychrophilum (strain ATCC 49511 / DSM 21280 / CIP 103535 / JIP02/86).